Reading from the N-terminus, the 426-residue chain is Phosphomethylpyrimidine synthase (426 aa).

Residues Asn65, Met94, Tyr123, His162, 184–186 (SRG), 225–228 (DGMR), and Glu264 contribute to the substrate site. Zn(2+) is bound at residue His268. Tyr291 provides a ligand contact to substrate. His332 is a binding site for Zn(2+). 3 residues coordinate [4Fe-4S] cluster: Cys408, Cys411, and Cys415.

Belongs to the ThiC family. It depends on [4Fe-4S] cluster as a cofactor.

The enzyme catalyses 5-amino-1-(5-phospho-beta-D-ribosyl)imidazole + S-adenosyl-L-methionine = 4-amino-2-methyl-5-(phosphooxymethyl)pyrimidine + CO + 5'-deoxyadenosine + formate + L-methionine + 3 H(+). It functions in the pathway cofactor biosynthesis; thiamine diphosphate biosynthesis. In terms of biological role, catalyzes the synthesis of the hydroxymethylpyrimidine phosphate (HMP-P) moiety of thiamine from aminoimidazole ribotide (AIR) in a radical S-adenosyl-L-methionine (SAM)-dependent reaction. The polypeptide is Phosphomethylpyrimidine synthase (Methanococcus maripaludis (strain C5 / ATCC BAA-1333)).